A 185-amino-acid chain; its full sequence is MQSTQGIERSGEHGRVIVAAVRIRGLVDVSPEVNHTLNLLRLRRRFTCSVYVLSDSIKGMLKSVESWATWGELSRDTLIQLLRRRGRIVGDLPLTDEYLKKYGWGSVEELVDAYLKGEVKSLWCRRGEGPRMINGKASCIPGLKPFFRLHPPKGGFKGSIKKPYGAGGELGYRGLDINDLILRMI.

It belongs to the universal ribosomal protein uL30 family. As to quaternary structure, part of the 50S ribosomal subunit.

This is Large ribosomal subunit protein uL30 from Caldivirga maquilingensis (strain ATCC 700844 / DSM 13496 / JCM 10307 / IC-167).